A 591-amino-acid chain; its full sequence is Aspartate--tRNA ligase (591 aa).

L-aspartate is bound at residue Glu173. Positions 197 to 200 are aspartate; the sequence is QLFK. Arg219 contributes to the L-aspartate binding site. ATP-binding positions include 219–221 and Gln228; that span reads RDE. Residue His448 participates in L-aspartate binding. ATP is bound at residue Glu482. Arg489 contacts L-aspartate. Position 534–537 (534–537) interacts with ATP; the sequence is GLDR.

The protein belongs to the class-II aminoacyl-tRNA synthetase family. Type 1 subfamily. Homodimer.

Its subcellular location is the cytoplasm. The catalysed reaction is tRNA(Asp) + L-aspartate + ATP = L-aspartyl-tRNA(Asp) + AMP + diphosphate. In terms of biological role, catalyzes the attachment of L-aspartate to tRNA(Asp) in a two-step reaction: L-aspartate is first activated by ATP to form Asp-AMP and then transferred to the acceptor end of tRNA(Asp). The chain is Aspartate--tRNA ligase from Shewanella amazonensis (strain ATCC BAA-1098 / SB2B).